The primary structure comprises 543 residues: Sensor histidine kinase DcuS (543 aa).

Residues 1–20 (MRHSLPYHILRKRPMKLSTT) lie on the Cytoplasmic side of the membrane. Residues 21–41 (VILMVSAVLFSVLLVVHLIYF) traverse the membrane as a helical segment. The Periplasmic portion of the chain corresponds to 42–181 (SQISDMTRDG…VTQQINDSRW (140 aa)). (R)-malate is bound by residues 107–110 (RYSH), Lys121, 140–142 (GFL), and Arg147. The chain crosses the membrane as a helical span at residues 182–202 (SIIWSVLFGMLVGLIGTCILV). The Cytoplasmic portion of the chain corresponds to 203-543 (KVLKKILFGL…IPWDGERSNR (341 aa)). The PAS domain occupies 212–323 (LEPYEISTLF…IIGAISTFRD (112 aa)). Positions 346 to 538 (ERSHEFMNKL…QFFVQIPWDG (193 aa)) constitute a Histidine kinase domain. His349 is subject to Phosphohistidine; by autocatalysis.

Homodimer. Autophosphorylated. The phosphoryl group is rapidly transferred to DcuR.

Its subcellular location is the cell inner membrane. It carries out the reaction ATP + protein L-histidine = ADP + protein N-phospho-L-histidine.. In terms of biological role, member of the two-component regulatory system DcuR/DcuS. Involved in the C4-dicarboxylate-stimulated regulation of the genes encoding the anaerobic fumarate respiratory system (frdABCD; nuoAN; dcuB; sdhCDAB; etc.). Weakly regulates the aerobic C4-dicarboxylate transporter dctA. Activates DcuR by phosphorylation. The chain is Sensor histidine kinase DcuS (dcuS) from Shigella flexneri.